Reading from the N-terminus, the 655-residue chain is Probable replication factor A 73 kDa subunit (655 aa).

The segment at 195–217 (NRAAAPEATRARAVPPPARRTAS) is disordered. Residues 196–207 (RAAAPEATRARA) show a composition bias toward low complexity. Residues 236-326 (FKIHGMVSRK…TLRSDSIIEA (91 aa)) constitute a DNA-binding region (OB). A C4-type zinc finger spans residues 518-539 (CASEGCQKKLVGENGDYRCEKC).

Belongs to the replication factor A protein 1 family. Component of the heterotrimeric canonical replication protein A complex (RPA).

The protein resides in the nucleus. As part of the heterotrimeric replication protein A complex (RPA/RP-A), binds and stabilizes single-stranded DNA intermediates, that form during DNA replication or upon DNA stress. It prevents their reannealing and in parallel, recruits and activates different proteins and complexes involved in DNA metabolism. Thereby, it plays an essential role both in DNA replication and the cellular response to DNA damage. The protein is Probable replication factor A 73 kDa subunit of Caenorhabditis elegans.